A 92-amino-acid polypeptide reads, in one-letter code: Acylphosphatase (92 aa).

Cysteines 5 and 49 form a disulfide. Positions 5-92 (CIIAWVYGRV…SGELTDFRIR (88 aa)) constitute an Acylphosphatase-like domain. Active-site residues include Arg20 and Asn38.

It belongs to the acylphosphatase family.

The catalysed reaction is an acyl phosphate + H2O = a carboxylate + phosphate + H(+). This chain is Acylphosphatase, found in Escherichia coli O6:H1 (strain CFT073 / ATCC 700928 / UPEC).